The following is a 274-amino-acid chain: MGLRRFKPTSPARRQMIIPDFSEITKKEPEKSLIAPLKKTGGRNSYGRVTVRFRGGGHKRRYRIIDFKRDKVGIPARVVSIEYDPNRTARIALLVYADGEKRYILAPQGLNVGDTVLNGPDAEIKPGNALPLENIPVGTIVHNVEFIPGKGGQIARSAGTSCQLMAKEGKYALLRMPSGELRKVPVKCYATIGVVGNEDHKNEVDGKAGRVRWKGRKPHVRGVAMNPVDHPHGGGEGRGKGHHPQSPWGQLAKGYKTRRGKKASDKLIVRRRNG.

The disordered stretch occupies residues 222–274 (GVAMNPVDHPHGGGEGRGKGHHPQSPWGQLAKGYKTRRGKKASDKLIVRRRNG). The span at 229–239 (DHPHGGGEGRG) shows a compositional bias: basic and acidic residues.

It belongs to the universal ribosomal protein uL2 family. As to quaternary structure, part of the 50S ribosomal subunit. Forms a bridge to the 30S subunit in the 70S ribosome.

Functionally, one of the primary rRNA binding proteins. Required for association of the 30S and 50S subunits to form the 70S ribosome, for tRNA binding and peptide bond formation. It has been suggested to have peptidyltransferase activity; this is somewhat controversial. Makes several contacts with the 16S rRNA in the 70S ribosome. The protein is Large ribosomal subunit protein uL2 of Thermosipho africanus (strain TCF52B).